A 315-amino-acid polypeptide reads, in one-letter code: tRNA dimethylallyltransferase (315 aa).

An ATP-binding site is contributed by 13 to 20 (GPTASGKT). Residue 15 to 20 (TASGKT) coordinates substrate. 4 interaction with substrate tRNA regions span residues 38-41 (DSAL), 162-166 (QRLSR), 243-248 (RCVGYR), and 276-283 (KRQITWLR).

Belongs to the IPP transferase family. Monomer. The cofactor is Mg(2+).

The enzyme catalyses adenosine(37) in tRNA + dimethylallyl diphosphate = N(6)-dimethylallyladenosine(37) in tRNA + diphosphate. Its function is as follows. Catalyzes the transfer of a dimethylallyl group onto the adenine at position 37 in tRNAs that read codons beginning with uridine, leading to the formation of N6-(dimethylallyl)adenosine (i(6)A). In Vibrio vulnificus (strain CMCP6), this protein is tRNA dimethylallyltransferase.